The following is a 66-amino-acid chain: Venom peptide CtAPI (66 aa).

Cystine bridges form between cysteine 7-cysteine 44, cysteine 16-cysteine 40, cysteine 20-cysteine 33, cysteine 24-cysteine 64, and cysteine 46-cysteine 58. In terms of domain architecture, TIL spans 7–64; sequence CEKDEEFVNCAPRCPQNCRNIRSYQPCLVLTPVCAPGCVCRSGKVKNDRGDCVSITDC.

The protein belongs to the serine protease inhibitor-like (TIL domain-containing) family. Expressed by the venom gland.

It localises to the secreted. Serine protease inhibitor. This Chaerilus tricostatus (Scorpion) protein is Venom peptide CtAPI.